A 78-amino-acid chain; its full sequence is Large ribosomal subunit protein bL28 (78 aa).

This sequence belongs to the bacterial ribosomal protein bL28 family.

This Synechococcus sp. (strain CC9311) protein is Large ribosomal subunit protein bL28.